The chain runs to 1493 residues: Mitogen-activated protein kinase kinase kinase 1 (1493 aa).

Low complexity predominate over residues 1-23 (MAAAAGDRASSSGFPGAAAASPE). Disordered regions lie at residues 1–178 (MAAA…PEER) and 194–300 (HEWL…EETS). The residue at position 2 (Ala-2) is an N-acetylalanine. Residue Ser-21 is modified to Phosphoserine. Positions 24–35 (AGGGGGGGGALQ) are enriched in gly residues. Residues 36–46 (GSGAPAAGAAG) are compositionally biased toward low complexity. The segment covering 89-99 (PPCPSTSPSPE) has biased composition (pro residues). Residues 140–156 (ARSPAGAEPPSAAAPSG) are compositionally biased toward low complexity. Residue Ser-142 is modified to Phosphoserine. Basic and acidic residues predominate over residues 157 to 178 (REMENKETLKGLHKMEDRPEER). Residues 235–256 (SAAPAPKGRRSPSPGSSPSGRS) are compositionally biased toward low complexity. The residue at position 270 (Ser-270) is a Phosphoserine. Thr-280 carries the phosphothreonine modification. Ser-287, Ser-292, and Ser-295 each carry phosphoserine. The segment at 333–361 (YRVFIGPQNCSCGRGAFCIHLLFVMLRVF) adopts an SWIM-type zinc-finger fold. Residues 411 to 428 (SNSHTLSSSSTSTSSSEN) are compositionally biased toward low complexity. The segment at 411–431 (SNSHTLSSSSTSTSSSENSIK) is disordered. The segment at 438 to 487 (CPICLLGMLDEESLTVCEDGCRNKLHHHCMSIWAEECRRNREPLICPLCR) adopts an RING-type zinc-finger fold. Residues Ser-502 and Ser-526 each carry the phosphoserine modification. Disordered stretches follow at residues 506 to 531 (SPASLRAVQQPSSPQQPVAGSQRRNQ) and 895 to 914 (EHTVHREKTGKGLSATRLSA). Residues 512–527 (AVQQPSSPQQPVAGSQ) show a composition bias toward low complexity. At Ser-915 the chain carries Phosphoserine. 2 disordered regions span residues 927 to 957 (SVGLPSSTTTEQPKPAVQTKGRPHSQCLNSS) and 992 to 1066 (PCKI…TLDL). Polar residues predominate over residues 998–1013 (ASPQTQRKFSLQFQRN). A phosphoserine mark is found at Ser-999 and Ser-1024. Polar residues predominate over residues 1049–1063 (GSTSKLGDATKSSMT). The region spanning 1224–1489 (WLKGQQIGLG…SRELLKHPVF (266 aa)) is the Protein kinase domain. ATP-binding positions include 1230-1238 (IGLGAFSSC) and Lys-1253. The active-site Proton acceptor is the Asp-1350. A phosphothreonine; by autocatalysis mark is found at Thr-1381 and Thr-1393.

Belongs to the protein kinase superfamily. STE Ser/Thr protein kinase family. MAP kinase kinase kinase subfamily. As to quaternary structure, binds both upstream activators and downstream substrates in multimolecular complexes through its N-terminus. Oligomerizes after binding MAP4K2 or TRAF2. Interacts with AXIN1. Interacts (via the kinase catalytic domain) with STK38. Interacts with GRIPAP1. It depends on Mg(2+) as a cofactor. Autophosphorylated. As to expression, highly expressed in the heart and spleen while a lower level expression is seen in the liver.

The catalysed reaction is L-seryl-[protein] + ATP = O-phospho-L-seryl-[protein] + ADP + H(+). It catalyses the reaction L-threonyl-[protein] + ATP = O-phospho-L-threonyl-[protein] + ADP + H(+). Its activity is regulated as follows. Activated by autophosphorylation on Thr-1381 and Thr-1393 following oligomerization. In terms of biological role, component of a protein kinase signal transduction cascade. Activates the ERK and JNK kinase pathways by phosphorylation of MAP2K1 and MAP2K4. May phosphorylate the MAPK8/JNK1 kinase. Activates CHUK and IKBKB, the central protein kinases of the NF-kappa-B pathway. In Mus musculus (Mouse), this protein is Mitogen-activated protein kinase kinase kinase 1 (Map3k1).